A 186-amino-acid chain; its full sequence is MIILLVGMPGSGKGEVAKAFRRRGIPVISMGDAIREEAEKRGIPKTPEGLKYVSLKVREELGPGAVAILTIPKVRGIIKRKGIVVIEGVRSPAEVQEFRREFKNERVIILAIHSPPKVRFERLRRRGRSDDPKTWNEFLDRDKKELGFGIGEVMSLADYVILNNCTFNEFQRKIEKVVSKILSNWP.

7 to 14 (GMPGSGKG) lines the ATP pocket.

The protein belongs to the UPF0200 family.

The sequence is that of UPF0200 protein PH1008 from Pyrococcus horikoshii (strain ATCC 700860 / DSM 12428 / JCM 9974 / NBRC 100139 / OT-3).